A 663-amino-acid polypeptide reads, in one-letter code: DNA topoisomerase 4 subunit B (663 aa).

ATP-binding positions include Tyr7, Asn47, Asp74, Gly114 to Ala120, and Lys341. Residues Arg386–Ala416 are disordered. The span at Glu387–Ser398 shows a compositional bias: basic and acidic residues. A Toprim domain is found at Asn424 to Pro538. Positions 430, 503, and 505 each coordinate Mg(2+).

The protein belongs to the type II topoisomerase family. ParE type 2 subfamily. As to quaternary structure, heterotetramer composed of ParC and ParE. Requires Mg(2+) as cofactor. The cofactor is Mn(2+). Ca(2+) is required as a cofactor.

It carries out the reaction ATP-dependent breakage, passage and rejoining of double-stranded DNA.. Topoisomerase IV is essential for chromosome segregation. It relaxes supercoiled DNA. Performs the decatenation events required during the replication of a circular DNA molecule. The chain is DNA topoisomerase 4 subunit B from Staphylococcus aureus (strain Mu50 / ATCC 700699).